The following is a 315-amino-acid chain: Homoserine kinase (315 aa).

97–107 (PPARGLGSSAT) is a binding site for ATP.

This sequence belongs to the GHMP kinase family. Homoserine kinase subfamily.

The protein resides in the cytoplasm. It catalyses the reaction L-homoserine + ATP = O-phospho-L-homoserine + ADP + H(+). It functions in the pathway amino-acid biosynthesis; L-threonine biosynthesis; L-threonine from L-aspartate: step 4/5. Functionally, catalyzes the ATP-dependent phosphorylation of L-homoserine to L-homoserine phosphate. In Prochlorococcus marinus (strain NATL1A), this protein is Homoserine kinase.